The following is a 332-amino-acid chain: Ornithine carbamoyltransferase 1, catabolic (332 aa).

Carbamoyl phosphate contacts are provided by residues 56–59 (STRT), Gln83, Arg107, and 134–137 (HPTQ). L-ornithine is bound by residues Asn167, Asp231, and 235 to 236 (SM). Carbamoyl phosphate is bound by residues 273 to 274 (CL) and Arg318.

Belongs to the aspartate/ornithine carbamoyltransferase superfamily. OTCase family.

The protein localises to the cytoplasm. It catalyses the reaction carbamoyl phosphate + L-ornithine = L-citrulline + phosphate + H(+). The protein operates within amino-acid degradation; L-arginine degradation via ADI pathway; carbamoyl phosphate from L-arginine: step 2/2. Reversibly catalyzes the transfer of the carbamoyl group from carbamoyl phosphate (CP) to the N(epsilon) atom of ornithine (ORN) to produce L-citrulline. In Staphylococcus epidermidis (strain ATCC 12228 / FDA PCI 1200), this protein is Ornithine carbamoyltransferase 1, catabolic (arcB1).